Consider the following 362-residue polypeptide: 3-dehydroquinate synthase (362 aa).

Residues 74–79 (DGEEHK), 108–112 (GVTGD), 132–133 (TT), lysine 145, and lysine 154 each bind NAD(+). The Zn(2+) site is built by glutamate 187, histidine 250, and histidine 267.

Belongs to the sugar phosphate cyclases superfamily. Dehydroquinate synthase family. It depends on Co(2+) as a cofactor. Zn(2+) is required as a cofactor. NAD(+) serves as cofactor.

It localises to the cytoplasm. It carries out the reaction 7-phospho-2-dehydro-3-deoxy-D-arabino-heptonate = 3-dehydroquinate + phosphate. It functions in the pathway metabolic intermediate biosynthesis; chorismate biosynthesis; chorismate from D-erythrose 4-phosphate and phosphoenolpyruvate: step 2/7. Functionally, catalyzes the conversion of 3-deoxy-D-arabino-heptulosonate 7-phosphate (DAHP) to dehydroquinate (DHQ). This is 3-dehydroquinate synthase from Syntrophotalea carbinolica (strain DSM 2380 / NBRC 103641 / GraBd1) (Pelobacter carbinolicus).